The primary structure comprises 202 residues: Imidazole glycerol phosphate synthase subunit HisH (202 aa).

Residues 3–202 form the Glutamine amidotransferase type-1 domain; it reads RIVIIDYGLG…KILRNFVEMC (200 aa). C79 serves as the catalytic Nucleophile. Catalysis depends on residues H183 and E185.

As to quaternary structure, heterodimer of HisH and HisF.

It localises to the cytoplasm. It catalyses the reaction 5-[(5-phospho-1-deoxy-D-ribulos-1-ylimino)methylamino]-1-(5-phospho-beta-D-ribosyl)imidazole-4-carboxamide + L-glutamine = D-erythro-1-(imidazol-4-yl)glycerol 3-phosphate + 5-amino-1-(5-phospho-beta-D-ribosyl)imidazole-4-carboxamide + L-glutamate + H(+). The catalysed reaction is L-glutamine + H2O = L-glutamate + NH4(+). Its pathway is amino-acid biosynthesis; L-histidine biosynthesis; L-histidine from 5-phospho-alpha-D-ribose 1-diphosphate: step 5/9. IGPS catalyzes the conversion of PRFAR and glutamine to IGP, AICAR and glutamate. The HisH subunit catalyzes the hydrolysis of glutamine to glutamate and ammonia as part of the synthesis of IGP and AICAR. The resulting ammonia molecule is channeled to the active site of HisF. The sequence is that of Imidazole glycerol phosphate synthase subunit HisH from Methanosarcina mazei (strain ATCC BAA-159 / DSM 3647 / Goe1 / Go1 / JCM 11833 / OCM 88) (Methanosarcina frisia).